A 388-amino-acid polypeptide reads, in one-letter code: Formate-dependent phosphoribosylglycinamide formyltransferase (388 aa).

N(1)-(5-phospho-beta-D-ribosyl)glycinamide-binding positions include 20–21 and Glu80; that span reads EL. ATP is bound by residues Arg112, Lys153, 158 to 163, 193 to 196, and Glu201; these read SSGKGQ and EEFI. The ATP-grasp domain occupies 117 to 306; that stretch reads RLAFEKLGLR…EFEIHARAIL (190 aa). Residues Glu265 and Glu277 each contribute to the Mg(2+) site. N(1)-(5-phospho-beta-D-ribosyl)glycinamide-binding positions include Asp284, Lys352, and 359 to 360; that span reads RR.

Belongs to the PurK/PurT family. Homodimer.

The catalysed reaction is N(1)-(5-phospho-beta-D-ribosyl)glycinamide + formate + ATP = N(2)-formyl-N(1)-(5-phospho-beta-D-ribosyl)glycinamide + ADP + phosphate + H(+). It participates in purine metabolism; IMP biosynthesis via de novo pathway; N(2)-formyl-N(1)-(5-phospho-D-ribosyl)glycinamide from N(1)-(5-phospho-D-ribosyl)glycinamide (formate route): step 1/1. In terms of biological role, involved in the de novo purine biosynthesis. Catalyzes the transfer of formate to 5-phospho-ribosyl-glycinamide (GAR), producing 5-phospho-ribosyl-N-formylglycinamide (FGAR). Formate is provided by PurU via hydrolysis of 10-formyl-tetrahydrofolate. This is Formate-dependent phosphoribosylglycinamide formyltransferase from Methanococcus maripaludis (strain DSM 14266 / JCM 13030 / NBRC 101832 / S2 / LL).